Here is a 136-residue protein sequence, read N- to C-terminus: Nucleoside diphosphate kinase (136 aa).

6 residues coordinate ATP: K10, F58, R86, T92, R104, and N114. H117 serves as the catalytic Pros-phosphohistidine intermediate.

This sequence belongs to the NDK family. Homotetramer. Mg(2+) serves as cofactor.

The protein resides in the cytoplasm. It catalyses the reaction a 2'-deoxyribonucleoside 5'-diphosphate + ATP = a 2'-deoxyribonucleoside 5'-triphosphate + ADP. The catalysed reaction is a ribonucleoside 5'-diphosphate + ATP = a ribonucleoside 5'-triphosphate + ADP. Functionally, major role in the synthesis of nucleoside triphosphates other than ATP. The ATP gamma phosphate is transferred to the NDP beta phosphate via a ping-pong mechanism, using a phosphorylated active-site intermediate. The sequence is that of Nucleoside diphosphate kinase from Mycobacterium marinum (strain ATCC BAA-535 / M).